Here is a 339-residue protein sequence, read N- to C-terminus: GTP 3',8-cyclase (339 aa).

The Radical SAM core domain maps to 13 to 249 (RYGRPLRDLR…GEVAQRHAFA (237 aa)). Arg22 contributes to the GTP binding site. [4Fe-4S] cluster-binding residues include Cys29 and Cys33. Position 35 (Tyr35) interacts with S-adenosyl-L-methionine. [4Fe-4S] cluster is bound at residue Cys36. Residue Arg75 coordinates GTP. Gly79 is a binding site for S-adenosyl-L-methionine. Thr106 is a GTP binding site. Ser130 provides a ligand contact to S-adenosyl-L-methionine. A GTP-binding site is contributed by Lys168. Met202 lines the S-adenosyl-L-methionine pocket. The [4Fe-4S] cluster site is built by Cys266 and Cys269. Residue 271-273 (RAR) coordinates GTP. Residue Cys283 coordinates [4Fe-4S] cluster.

The protein belongs to the radical SAM superfamily. MoaA family. Monomer and homodimer. Requires [4Fe-4S] cluster as cofactor.

The catalysed reaction is GTP + AH2 + S-adenosyl-L-methionine = (8S)-3',8-cyclo-7,8-dihydroguanosine 5'-triphosphate + 5'-deoxyadenosine + L-methionine + A + H(+). It participates in cofactor biosynthesis; molybdopterin biosynthesis. Functionally, catalyzes the cyclization of GTP to (8S)-3',8-cyclo-7,8-dihydroguanosine 5'-triphosphate. The chain is GTP 3',8-cyclase from Xanthomonas campestris pv. campestris (strain B100).